The chain runs to 898 residues: Neutral alpha-glucosidase C (898 aa).

A disordered region spans residues 154–173 (QRATKGNGQNTPAATSQENQ). Positions 157 to 171 (TKGNGQNTPAATSQE) are enriched in polar residues. D495 acts as the Nucleophile in catalysis. E498 is an active-site residue. D571 serves as the catalytic Proton donor.

Belongs to the glycosyl hydrolase 31 family.

The catalysed reaction is Hydrolysis of terminal, non-reducing (1-&gt;4)-linked alpha-D-glucose residues with release of alpha-D-glucose.. Its function is as follows. Has alpha-glucosidase activity. This chain is Neutral alpha-glucosidase C (Ganc), found in Mus musculus (Mouse).